We begin with the raw amino-acid sequence, 292 residues long: uncharacterized protein (292 aa).

The protein localises to the virion. This is an uncharacterized protein from Acanthamoeba polyphaga (Amoeba).